Reading from the N-terminus, the 266-residue chain is GTP cyclohydrolase MptA (266 aa).

Belongs to the GTP cyclohydrolase IV family. In terms of assembly, homodimer. The cofactor is Fe(2+).

The enzyme catalyses GTP + H2O = 7,8-dihydroneopterin 2',3'-cyclic phosphate + formate + diphosphate + H(+). It participates in cofactor biosynthesis; 5,6,7,8-tetrahydromethanopterin biosynthesis. Functionally, converts GTP to 7,8-dihydro-D-neopterin 2',3'-cyclic phosphate, the first intermediate in the biosynthesis of coenzyme methanopterin. This is GTP cyclohydrolase MptA from Pyrococcus abyssi (strain GE5 / Orsay).